The sequence spans 316 residues: Na(+)/H(+) exchange regulatory cofactor NHE-RF2 (316 aa).

Positions 11 to 91 (LCRLVRGEQG…ETRLLVVDKE (81 aa)) constitute a PDZ 1 domain. Positions 109–148 (QRGLPPAHDPWEPKPDWARAGSLSSDAGQKDVNGPPRELR) are disordered. A phosphoserine mark is found at Ser130, Ser183, and Ser254. The region spanning 151-231 (LCHLRKGPQG…EARLLLVDPE (81 aa)) is the PDZ 2 domain. The segment at 244–303 (TEEHVEGPLPSPITNGTSPAQDASAWKRDPFQESGLHLSPTAAEAKEKARATRVNKRAPQ) is disordered. Positions 255–264 (PITNGTSPAQ) are enriched in polar residues. At Ser282 the chain carries Phosphoserine.

As to quaternary structure, homodimer, and heterodimer with NHERF1. Binds ADRB2, SLC9A3, P2RY1, P2YR2, SRY, RDX, PDZK1 and LPAR2. Found in a complex with EZR, PODXL and NHERF2. Interacts (via the PDZ domains) with PODXL (via the C-terminal PDZ-binding motif DTHL); interaction is detected in glomerular epithelium cells. Binds PODXL. Interacts with SGK1 and KCNJ1/ROMK1. Interacts (via the PDZ domains) with SLC26A6. As to expression, detected in kidney glomeruli.

The protein localises to the endomembrane system. Its subcellular location is the nucleus. It is found in the apical cell membrane. Scaffold protein that connects plasma membrane proteins with members of the ezrin/moesin/radixin family and thereby helps to link them to the actin cytoskeleton and to regulate their surface expression. Necessary for cAMP-mediated phosphorylation and inhibition of SLC9A3. May also act as scaffold protein in the nucleus. The chain is Na(+)/H(+) exchange regulatory cofactor NHE-RF2 (NHERF2) from Oryctolagus cuniculus (Rabbit).